Reading from the N-terminus, the 292-residue chain is Cyclin-dependent kinase 5 homolog (292 aa).

Residues 4 to 286 form the Protein kinase domain; the sequence is YEKLEKIGEG…AEQAMQHPYF (283 aa). ATP is bound by residues 10–18 and Lys-33; that span reads IGEGTYGTV. Thr-14 is modified (phosphothreonine). A Phosphotyrosine modification is found at Tyr-15. Catalysis depends on Asp-126, which acts as the Proton acceptor. Ser-159 is subject to Phosphoserine.

Belongs to the protein kinase superfamily. CMGC Ser/Thr protein kinase family. CDC2/CDKX subfamily.

The enzyme catalyses L-seryl-[protein] + ATP = O-phospho-L-seryl-[protein] + ADP + H(+). It catalyses the reaction L-threonyl-[protein] + ATP = O-phospho-L-threonyl-[protein] + ADP + H(+). In terms of biological role, probably involved in the control of the cell cycle. Interacts with D1 and D3-type G1 cyclins. Possible regulator of neuronal differentiation and/or development. The chain is Cyclin-dependent kinase 5 homolog (Cdk5) from Glossina morsitans morsitans (Savannah tsetse fly).